Consider the following 162-residue polypeptide: Caveolin-2 (162 aa).

Residues 1–86 (MGLETEKTDV…FEISKYVMYK (86 aa)) lie on the Cytoplasmic side of the membrane. Tyr-19 bears the Phosphotyrosine; by SRC mark. Phosphoserine occurs at positions 20 and 23. Tyr-27 carries the phosphotyrosine; by SRC modification. Ser-36 bears the Phosphoserine mark. Residues 87-107 (FLTVFLAIPLAFLAGILFATL) constitute an intramembrane region (helical). The Cytoplasmic segment spans residues 108–162 (SCLHIWIIMPFVKTCLMVLPSVQTIWKSVTDAIVAPLCTSIGRSFSSVSLQLSQD).

Belongs to the caveolin family. Monomer or homodimer. Interacts with CAV1; the interaction forms a stable heterooligomeric complex that is required for targeting to lipid rafts and for caveolae formation. Tyrosine phosphorylated forms do not form heterooligomers with the Tyr-19-phosphorylated form existing as a monomer or dimer, and the Tyr-27-form as a monomer only. Interacts (tyrosine phosphorylated form) with the SH2 domain-containing proteins, RASA1, NCK1 and SRC. Interacts (tyrosine phosphorylated form) with INSR, the interaction (Tyr-27-phosphorylated form) is increased on insulin stimulation. Interacts (Tyr-19 phosphorylated form) with MAPK1 (phosphorylated form); the interaction, promoted by insulin, leads to nuclear location and MAPK1 activation. Interacts with STAT3; the interaction is increased on insulin-induced tyrosine phosphorylation leading to STAT activation. Phosphorylated on serine and tyrosine residues. CAV1 promotes phosphorylation on Ser-23 which then targets the complex to the plasma membrane, lipid rafts and caveolae. Phosphorylation on Ser-36 appears to modulate mitosis in endothelial cells. Phosphorylation on both Tyr-19 and Tyr-27 is required for insulin-induced 'Ser-727' phosphorylation of STAT3 and its activation. Phosphorylation on Tyr-19 is required for insulin-induced phosphorylation of MAPK1 and DNA binding of STAT3. Tyrosine phosphorylation is induced by both EGF and insulin (By. similarity).

It is found in the nucleus. Its subcellular location is the cytoplasm. The protein localises to the golgi apparatus membrane. It localises to the cell membrane. The protein resides in the membrane. It is found in the caveola. Its function is as follows. May act as a scaffolding protein within caveolar membranes. Interacts directly with G-protein alpha subunits and can functionally regulate their activity. Acts as an accessory protein in conjunction with CAV1 in targeting to lipid rafts and driving caveolae formation. The Ser-36 phosphorylated form has a role in modulating mitosis in endothelial cells. Positive regulator of cellular mitogenesis of the MAPK signaling pathway. Required for the insulin-stimulated nuclear translocation and activation of MAPK1 and STAT3, and the subsequent regulation of cell cycle progression. The chain is Caveolin-2 (CAV2) from Aotus nancymaae (Ma's night monkey).